The primary structure comprises 316 residues: UDP-N-acetylenolpyruvoylglucosamine reductase (316 aa).

Residues 27 to 225 (VGGKAERFYR…KTAINALLKK (199 aa)) form the FAD-binding PCMH-type domain. The active site involves Arg-190. Ser-239 serves as the catalytic Proton donor. Glu-309 is a catalytic residue.

This sequence belongs to the MurB family. It depends on FAD as a cofactor.

The protein localises to the cytoplasm. It carries out the reaction UDP-N-acetyl-alpha-D-muramate + NADP(+) = UDP-N-acetyl-3-O-(1-carboxyvinyl)-alpha-D-glucosamine + NADPH + H(+). Its pathway is cell wall biogenesis; peptidoglycan biosynthesis. Its function is as follows. Cell wall formation. This is UDP-N-acetylenolpyruvoylglucosamine reductase from Coxiella burnetii (strain RSA 331 / Henzerling II).